The primary structure comprises 295 residues: Tissue factor (295 aa).

Positions 1 to 32 are cleaved as a signal peptide; sequence METPAWPRVPRPETAVARTLLLGWVFAQVAGA. Over 33-251 the chain is Extracellular; that stretch reads SGTTNTVAAY…MGQEKGEFRE (219 aa). Short sequence motifs (WKS motif) lie at residues 46 to 48 and 77 to 79; these read WKS. A disulfide bond links Cys81 and Cys89. N-linked (GlcNAc...) asparagine glycans are attached at residues Asn156 and Asn169. Residues 190 to 192 carry the WKS motif motif; that stretch reads WKS. Cys218 and Cys241 form a disulfide bridge. A helical transmembrane segment spans residues 252–274; the sequence is IFYIIGAVVFVVIILVIILAISL. At 275 to 295 the chain is on the cytoplasmic side; that stretch reads HKCRKAGVGQSWKENSPLNVS. Cys277 carries the S-palmitoyl cysteine lipid modification.

This sequence belongs to the tissue factor family. As to quaternary structure, interacts with HSPE; the interaction, inhibited by heparin, promotes the generation of activated factor X and activates coagulation in the presence of activated factor VII. Lung, placenta and pancreas.

Its subcellular location is the membrane. It localises to the secreted. Its function is as follows. Initiates blood coagulation by forming a complex with circulating factor VII or VIIa. The [TF:VIIa] complex activates factors IX or X by specific limited proteolysis. TF plays a role in normal hemostasis by initiating the cell-surface assembly and propagation of the coagulation protease cascade. The sequence is that of Tissue factor (F3) from Homo sapiens (Human).